The following is a 374-amino-acid chain: GDSL esterase/lipase 1 (374 aa).

Residues 1–25 form the signal peptide; that stretch reads MENSQLVSITFLAYTIIISIGSINC. Asparagine 34 is a glycosylation site (N-linked (GlcNAc...) asparagine). The active-site Nucleophile is the serine 44. N-linked (GlcNAc...) asparagine glycans are attached at residues asparagine 184, asparagine 203, and asparagine 330. Residues aspartate 338 and histidine 341 each act as charge relay system in the active site. N-linked (GlcNAc...) asparagine glycosylation occurs at asparagine 360.

The protein belongs to the 'GDSL' lipolytic enzyme family.

It localises to the secreted. Its function is as follows. Confers resistance to the necrotrophic fungus Alternaria brassicicola. Possesses lipase and antimicrobial activities that directly disrupt fungal spore integrity. Triggers systemic resistance, mostly by the ethylene-dependent pathway. This Arabidopsis thaliana (Mouse-ear cress) protein is GDSL esterase/lipase 1.